We begin with the raw amino-acid sequence, 333 residues long: Cilia- and flagella-associated protein 119 (333 aa).

Over residues 1–10 the composition is skewed to polar residues; sequence MITPSSSQSL. 2 disordered regions span residues 1–70 and 309–333; these read MITP…ANLF and RLSS…TKTK. Ser34 is modified (phosphoserine). Over residues 44-58 the composition is skewed to polar residues; that stretch reads TDMQTESPAEATSSP. The stretch at 284–319 forms a coiled coil; it reads IKSQLSKELRQLQQLVEERLKESEERLSSKLAALEQ.

Its subcellular location is the cell projection. It is found in the cilium. The protein resides in the flagellum. The protein localises to the cytoplasmic vesicle. It localises to the secretory vesicle. Its subcellular location is the acrosome. It is found in the cytoplasm. The sequence is that of Cilia- and flagella-associated protein 119 from Mus musculus (Mouse).